A 737-amino-acid polypeptide reads, in one-letter code: Transcriptional repressor CTCF (737 aa).

N-acetylmethionine is present on Met-1. Lys-18 is covalently cross-linked (Glycyl lysine isopeptide (Lys-Gly) (interchain with G-Cter in SUMO2)). Lys-74 is covalently cross-linked (Glycyl lysine isopeptide (Lys-Gly) (interchain with G-Cter in SUMO)). The tract at residues 180–211 (QGELPPQEDPSWQKDPDYQPPAKKTKKTKKSK) is disordered. Basic residues predominate over residues 202–211 (KKTKKTKKSK). Lys-219 participates in a covalent cross-link: Glycyl lysine isopeptide (Lys-Gly) (interchain with G-Cter in SUMO2). A C2H2-type 1 zinc finger spans residues 266–288 (FQCELCSYTCPRRSNLDRHMKSH). The residue at position 289 (Thr-289) is a Phosphothreonine. The C2H2-type 2 zinc finger occupies 294 to 316 (HKCHLCGRAFRTVTLLRNHLNTH). At Thr-317 the chain carries Phosphothreonine. C2H2-type zinc fingers lie at residues 322–345 (HKCPDCDMAFVTSGELVRHRRYKH) and 351–373 (FKCSMCDYASVEVSKLKRHIRSH). Thr-374 carries the post-translational modification Phosphothreonine. The segment at 379–401 (FQCSLCSYASRDTYKLKRHMRTH) adopts a C2H2-type 5 zinc-finger fold. Ser-402 is modified (phosphoserine). 5 consecutive C2H2-type zinc fingers follow at residues 407-430 (YECYICHARFTQSGTMKMHILQKH), 437-460 (FHCPHCDTVIARKSDLGVHLRKQH), 467-489 (KKCRYCDAVFHERYALIQHQKSH), 495-517 (FKCDQCDYACRQERHMIMHKRTH), and 523-546 (YACSHCDKTFRQKQLLDMHFKRYH). A C2H2-type 11; atypical zinc finger spans residues 555 to 577 (FVCSKCGKTFTRRNTMARHADNC). Disordered stretches follow at residues 573–687 (HADN…EDQN) and 699–727 (KKEPDAEPAEGEEEEAQAAPADAPNGDLT). Positions 593 to 604 (KSKRGRKRKMRS) are enriched in basic residues. 3 positions are modified to phosphoserine: Ser-609, Ser-610, and Ser-612. Over residues 610-636 (SDSENAEPDLDDNEEEEEPAVEIEPEP) the composition is skewed to acidic residues. Positions 637–657 (EPQPQPQPQPQPQPVAPAPPP) are enriched in pro residues. The span at 668–687 (RTNQPKQNQPTAIIQVEDQN) shows a compositional bias: polar residues. A Glycyl lysine isopeptide (Lys-Gly) (interchain with G-Cter in SUMO); alternate cross-link involves residue Lys-699. Lys-699 participates in a covalent cross-link: Glycyl lysine isopeptide (Lys-Gly) (interchain with G-Cter in SUMO2); alternate. A compositionally biased stretch (acidic residues) spans 704-714 (AEPAEGEEEEA).

The protein belongs to the CTCF zinc-finger protein family. Interacts with CHD8. Interacts with LLPH. Interacts with CENPE. Interacts with BRD2; promoting BRD2 recruitment to chromatin. In terms of processing, sumoylated on Lys-74 and Lys-699; sumoylation of CTCF contributes to the repressive function of CTCF on the MYC P2 promoter.

Its subcellular location is the nucleus. The protein resides in the nucleoplasm. It localises to the chromosome. The protein localises to the centromere. Its function is as follows. Chromatin binding factor that binds to DNA sequence specific sites and regulates the 3D structure of chromatin. Binds together strands of DNA, thus forming chromatin loops, and anchors DNA to cellular structures, such as the nuclear lamina. Defines the boundaries between active and heterochromatic DNA via binding to chromatin insulators, thereby preventing interaction between promoter and nearby enhancers and silencers. Plays a critical role in the epigenetic regulation. Participates in the allele-specific gene expression at the imprinted IGF2/H19 gene locus. On the maternal allele, binding within the H19 imprinting control region (ICR) mediates maternally inherited higher-order chromatin conformation to restrict enhancer access to IGF2. Mediates interchromosomal association between IGF2/H19 and WSB1/NF1 and may direct distant DNA segments to a common transcription factory. Regulates asynchronous replication of IGF2/H19. Plays a critical role in gene silencing over considerable distances in the genome. Preferentially interacts with unmethylated DNA, preventing spreading of CpG methylation and maintaining methylation-free zones. Inversely, binding to target sites is prevented by CpG methylation. Plays an important role in chromatin remodeling. Can dimerize when it is bound to different DNA sequences, mediating long-range chromatin looping. Causes local loss of histone acetylation and gain of histone methylation in the beta-globin locus, without affecting transcription. When bound to chromatin, it provides an anchor point for nucleosomes positioning. Seems to be essential for homologous X-chromosome pairing. May participate with Tsix in establishing a regulatable epigenetic switch for X chromosome inactivation. May play a role in preventing the propagation of stable methylation at the escape genes from X-inactivation. Involved in sister chromatid cohesion. Associates with both centromeres and chromosomal arms during metaphase and required for cohesin localization to CTCF sites. Plays a role in the recruitment of CENPE to the pericentromeric/centromeric regions of the chromosome during mitosis. Acts as a transcriptional repressor binding to promoters of vertebrate MYC gene and BAG1 gene. Also binds to the PLK and PIM1 promoters. Acts as a transcriptional activator of APP. Regulates APOA1/C3/A4/A5 gene cluster and controls MHC class II gene expression. Plays an essential role in oocyte and preimplantation embryo development by activating or repressing transcription. Seems to act as tumor suppressor. The sequence is that of Transcriptional repressor CTCF (Ctcf) from Rattus norvegicus (Rat).